A 338-amino-acid polypeptide reads, in one-letter code: Ketol-acid reductoisomerase (NADP(+)) (338 aa).

Residues 1 to 181 (MKVYYDKDCD…GGGRTGIIET (181 aa)) form the KARI N-terminal Rossmann domain. Residues 24–27 (YGSQ), Arg47, Ser50, Thr52, and 82–85 (DEFQ) contribute to the NADP(+) site. Residue His107 is part of the active site. Gly133 is an NADP(+) binding site. Positions 182-327 (TFKDETETDL…EQLRAMMPWI (146 aa)) constitute a KARI C-terminal knotted domain. 4 residues coordinate Mg(2+): Asp190, Glu194, Glu226, and Glu230. Residue Ser251 coordinates substrate.

The protein belongs to the ketol-acid reductoisomerase family. Requires Mg(2+) as cofactor.

It carries out the reaction (2R)-2,3-dihydroxy-3-methylbutanoate + NADP(+) = (2S)-2-acetolactate + NADPH + H(+). The enzyme catalyses (2R,3R)-2,3-dihydroxy-3-methylpentanoate + NADP(+) = (S)-2-ethyl-2-hydroxy-3-oxobutanoate + NADPH + H(+). It functions in the pathway amino-acid biosynthesis; L-isoleucine biosynthesis; L-isoleucine from 2-oxobutanoate: step 2/4. Its pathway is amino-acid biosynthesis; L-valine biosynthesis; L-valine from pyruvate: step 2/4. Functionally, involved in the biosynthesis of branched-chain amino acids (BCAA). Catalyzes an alkyl-migration followed by a ketol-acid reduction of (S)-2-acetolactate (S2AL) to yield (R)-2,3-dihydroxy-isovalerate. In the isomerase reaction, S2AL is rearranged via a Mg-dependent methyl migration to produce 3-hydroxy-3-methyl-2-ketobutyrate (HMKB). In the reductase reaction, this 2-ketoacid undergoes a metal-dependent reduction by NADPH to yield (R)-2,3-dihydroxy-isovalerate. The sequence is that of Ketol-acid reductoisomerase (NADP(+)) from Ectopseudomonas mendocina (strain ymp) (Pseudomonas mendocina).